The primary structure comprises 209 residues: Ion-translocating oxidoreductase complex subunit G (209 aa).

A helical transmembrane segment spans residues 9–29 (GITLAIFAALTTGLTAVVNSL). Position 175 is an FMN phosphoryl threonine (Thr-175).

This sequence belongs to the RnfG family. As to quaternary structure, the complex is composed of six subunits: RnfA, RnfB, RnfC, RnfD, RnfE and RnfG. FMN is required as a cofactor.

It is found in the cell inner membrane. Part of a membrane-bound complex that couples electron transfer with translocation of ions across the membrane. In Photorhabdus laumondii subsp. laumondii (strain DSM 15139 / CIP 105565 / TT01) (Photorhabdus luminescens subsp. laumondii), this protein is Ion-translocating oxidoreductase complex subunit G.